Here is a 556-residue protein sequence, read N- to C-terminus: Oxygen-dependent choline dehydrogenase (556 aa).

An FAD-binding site is contributed by 4-33 (DYIIIGAGSAGNVLATRLTEDPNTSVLLLE). His-473 serves as the catalytic Proton acceptor.

It belongs to the GMC oxidoreductase family. Requires FAD as cofactor.

It carries out the reaction choline + A = betaine aldehyde + AH2. The catalysed reaction is betaine aldehyde + NAD(+) + H2O = glycine betaine + NADH + 2 H(+). It participates in amine and polyamine biosynthesis; betaine biosynthesis via choline pathway; betaine aldehyde from choline (cytochrome c reductase route): step 1/1. Functionally, involved in the biosynthesis of the osmoprotectant glycine betaine. Catalyzes the oxidation of choline to betaine aldehyde and betaine aldehyde to glycine betaine at the same rate. This is Oxygen-dependent choline dehydrogenase from Shigella flexneri serotype 5b (strain 8401).